We begin with the raw amino-acid sequence, 465 residues long: Putative mannose-1-phosphate guanylyltransferase (465 aa).

This sequence belongs to the mannose-6-phosphate isomerase type 2 family.

It carries out the reaction alpha-D-mannose 1-phosphate + GTP + H(+) = GDP-alpha-D-mannose + diphosphate. Its pathway is nucleotide-sugar biosynthesis; GDP-alpha-D-mannose biosynthesis; GDP-alpha-D-mannose from alpha-D-mannose 1-phosphate (GTP route): step 1/1. It participates in bacterial outer membrane biogenesis; LPS O-antigen biosynthesis. The sequence is that of Putative mannose-1-phosphate guanylyltransferase (rfbA) from Vibrio cholerae serotype O1 (strain ATCC 39315 / El Tor Inaba N16961).